A 281-amino-acid chain; its full sequence is NADPH-dependent 7-cyano-7-deazaguanine reductase (281 aa).

88–90 (VES) contacts substrate. Residue 90-91 (SK) coordinates NADPH. Cysteine 189 functions as the Thioimide intermediate in the catalytic mechanism. The Proton donor role is filled by aspartate 196. 228-229 (HE) provides a ligand contact to substrate. Residue 257-258 (RG) coordinates NADPH.

This sequence belongs to the GTP cyclohydrolase I family. QueF type 2 subfamily. As to quaternary structure, homodimer.

The protein resides in the cytoplasm. It carries out the reaction 7-aminomethyl-7-carbaguanine + 2 NADP(+) = 7-cyano-7-deazaguanine + 2 NADPH + 3 H(+). It participates in tRNA modification; tRNA-queuosine biosynthesis. Functionally, catalyzes the NADPH-dependent reduction of 7-cyano-7-deazaguanine (preQ0) to 7-aminomethyl-7-deazaguanine (preQ1). The sequence is that of NADPH-dependent 7-cyano-7-deazaguanine reductase from Klebsiella pneumoniae subsp. pneumoniae (strain ATCC 700721 / MGH 78578).